Reading from the N-terminus, the 208-residue chain is Imidazoleglycerol-phosphate dehydratase (208 aa).

Belongs to the imidazoleglycerol-phosphate dehydratase family.

The protein resides in the cytoplasm. The enzyme catalyses D-erythro-1-(imidazol-4-yl)glycerol 3-phosphate = 3-(imidazol-4-yl)-2-oxopropyl phosphate + H2O. Its pathway is amino-acid biosynthesis; L-histidine biosynthesis; L-histidine from 5-phospho-alpha-D-ribose 1-diphosphate: step 6/9. The sequence is that of Imidazoleglycerol-phosphate dehydratase from Pseudarthrobacter chlorophenolicus (strain ATCC 700700 / DSM 12829 / CIP 107037 / JCM 12360 / KCTC 9906 / NCIMB 13794 / A6) (Arthrobacter chlorophenolicus).